A 1900-amino-acid polypeptide reads, in one-letter code: Phosphatidylinositol 4-kinase STT4 (1900 aa).

The residue at position 459 (serine 459) is a Phosphoserine. Positions 1345 to 1530 constitute a PIK helical domain; that stretch reads KIEGADSNEL…KPTLDRIRER (186 aa). Positions 1531–1648 are pleckstrin homology (PH) domain conferring phosphoinositide binding specificity; sequence MVSSFSQSHR…EKWQAAIFKV (118 aa). The region spanning 1617-1884 is the PI3K/PI4K catalytic domain; the sequence is FMATFKIKKD…LIRKSYESIF (268 aa). The segment at 1623-1629 is G-loop; sequence IKKDVKD. Positions 1751 to 1759 are catalytic loop; it reads QFKDRHNGN. The interval 1770–1794 is activation loop; that stretch reads HIDFGFIFDIVPGGIKFEAVPFKLT.

It belongs to the PI3/PI4-kinase family. Type III PI4K subfamily.

The catalysed reaction is a 1,2-diacyl-sn-glycero-3-phospho-(1D-myo-inositol) + ATP = a 1,2-diacyl-sn-glycero-3-phospho-(1D-myo-inositol 4-phosphate) + ADP + H(+). Its function is as follows. Acts on phosphatidylinositol (PI) in the first committed step in the production of the second messenger inositol 1,4,5,-trisphosphate. STT4 functions in PKC1 protein kinase pathway. This chain is Phosphatidylinositol 4-kinase STT4 (STT4), found in Saccharomyces cerevisiae (strain ATCC 204508 / S288c) (Baker's yeast).